Reading from the N-terminus, the 63-residue chain is Small ribosomal subunit protein eS27 (63 aa).

Positions 18, 21, 37, and 40 each coordinate Zn(2+). A C4-type zinc finger spans residues 18-40; the sequence is CLDCGNQQVVFDRAASYVQCIIC.

It belongs to the eukaryotic ribosomal protein eS27 family. In terms of assembly, part of the 30S ribosomal subunit. Zn(2+) is required as a cofactor.

This is Small ribosomal subunit protein eS27 from Methanothermobacter thermautotrophicus (strain ATCC 29096 / DSM 1053 / JCM 10044 / NBRC 100330 / Delta H) (Methanobacterium thermoautotrophicum).